A 246-amino-acid chain; its full sequence is IPSRPVGGPCYLGKLTMLAPKHTDILKVLVNSSRTGIRRKRSTSHLDDTCSDEVQLWGPTARIFASILAPGVAAAQALREIERLACWSVKQANLTTSLLGDLLDDVTSIRHAVLQNRAAIDFLLLAHGHGCEDVAGMCCFNLSDQSESIQKKFQLMKEHVNKIGVDSDLIGSWLRGLFGGIGEWAVHLLKGLLLGLVVILLLVVCLPCLLQMLCGNRRKMINNSISYHTEYKKLQKACGQPESRIV.

Over 1 to 192 (IPSRPVGGPC…EWAVHLLKGL (192 aa)) the chain is Extracellular. N31 carries an N-linked (GlcNAc...) asparagine; by host glycan. A disulfide bridge links C50 with C86. The fusion peptide stretch occupies residues 58–78 (GPTARIFASILAPGVAAAQAL). Residues 75–125 (AQALREIERLACWSVKQANLTTSLLGDLLDDVTSIRHAVLQNRAAIDFLLL) adopt a coiled-coil conformation. A glycan (N-linked (GlcNAc...) asparagine; by host) is linked at N93. An immunosuppression region spans residues 114–130 (LQNRAAIDFLLLAHGHG). A disulfide bond links C131 and C138. An N-linked (GlcNAc...) asparagine; by host glycan is attached at N141. Residues 143–173 (SDQSESIQKKFQLMKEHVNKIGVDSDLIGSW) adopt a coiled-coil conformation. A helical transmembrane segment spans residues 193 to 213 (LLGLVVILLLVVCLPCLLQML). 2 S-palmitoyl cysteine; by host lipidation sites follow: C205 and C208. Residues 214–246 (CGNRRKMINNSISYHTEYKKLQKACGQPESRIV) are Cytoplasmic-facing.

It belongs to the Alpharetroviruses envelope glycoprotein family. In terms of assembly, heterodimer with the transmembrane protein. The mature envelope protein (Env) consists of a trimer of SU-TM heterodimers attached by a labile interchain disulfide bond. Interacts with the host cell entry receptor TVA isoforms pg900 and pg800; this interaction allows the viral attachment. As to quaternary structure, heterodimer with the surface protein. The mature envelope protein (Env) consists of a trimer of SU-TM heterodimers attached by a labile interchain disulfide bond. In terms of processing, specific enzymatic cleavages in vivo yield mature proteins. Envelope glycoproteins are synthesized as an inactive precursor that is N-glycosylated and processed likely by host cell furin or by a furin-like protease in the Golgi to yield the mature SU and TM proteins. The cleavage site between SU and TM requires the minimal sequence [KR]-X-[KR]-R. The transmembrane protein is palmitoylated. Palmitoylation is necessary for glycoprotein function and infectivity.

It localises to the virion membrane. The protein localises to the host cell membrane. Functionally, the surface protein (SU) attaches the virus to the host cell entry receptor TVA. This interaction triggers the refolding of the transmembrane protein (TM) thereby unmasking its fusion peptide and the formation of a reactive thiolate to activate its fusogenic potential. Fusion occurs at the host cell plasma membrane. Its function is as follows. The transmembrane protein (TM) acts as a class I viral fusion protein. Under the current model, the protein has at least 3 conformational states: pre-fusion native state, pre-hairpin intermediate state, and post-fusion hairpin state. During viral and target cell membrane fusion, the coiled coil regions (heptad repeats) assume a trimer-of-hairpins structure, positioning the fusion peptide in close proximity to the C-terminal region of the ectodomain. The formation of this structure appears to drive apposition and subsequent fusion of viral and target cell membranes. Membranes fusion leads to delivery of the nucleocapsid into the cytoplasm. In Rous sarcoma virus subgroup A (strain Schmidt-Ruppin) (RSV-SR-A), this protein is Envelope glycoprotein gp95 (env).